The primary structure comprises 329 residues: Malate dehydrogenase (329 aa).

Gly-13–Ser-19 contributes to the NAD(+) binding site. The substrate site is built by Arg-94 and Arg-100. Residues Asn-107, Gln-114, and Val-131–Asn-133 contribute to the NAD(+) site. Positions 133 and 164 each coordinate substrate. His-189 serves as the catalytic Proton acceptor.

The protein belongs to the LDH/MDH superfamily. MDH type 2 family.

The enzyme catalyses (S)-malate + NAD(+) = oxaloacetate + NADH + H(+). Its function is as follows. Catalyzes the reversible oxidation of malate to oxaloacetate. In Psychrobacter cryohalolentis (strain ATCC BAA-1226 / DSM 17306 / VKM B-2378 / K5), this protein is Malate dehydrogenase.